The following is a 418-amino-acid chain: Beta-arrestin-1 (418 aa).

The interaction with SRC stretch occupies residues 1-163 (MGDKGTRVFK…LEEKIHKRNS (163 aa)). Positions 45 to 86 (PEYLKERRVYVTLTCAFRYGREDLDVLGLTFRKDLFVANVQS) are interaction with CHRM2. Position 47 is a phosphotyrosine (tyrosine 47). 1D-myo-inositol hexakisphosphate is bound by residues lysine 250, methionine 255, lysine 324, and lysine 326. The tract at residues 318–418 (IVSYKVKVKL…GTGSPRLNDR (101 aa)) is interaction with TRAF6. Positions 353–375 (HPKPKEEPPHREVPEHETPVDTN) are disordered. The span at 355-371 (KPKEEPPHREVPEHETP) shows a compositional bias: basic and acidic residues. A [DE]-X(1,2)-F-X-X-[FL]-X-X-X-R motif motif is present at residues 385 to 395 (DIVFEDFARQR). Residues 397-418 (KGMKDDKEEEEDGTGSPRLNDR) are disordered. Serine 412 is subject to Phosphoserine; by GRK5.

Belongs to the arrestin family. As to quaternary structure, monomer. Homodimer. Homooligomer; the self-association is mediated by InsP6-binding. Heterooligomer with ARRB2; the association is mediated by InsP6-binding. Interacts with ADRB2 (phosphorylated). Interacts with CHRM2 (phosphorylated). Interacts with LHCGR. Interacts with CYTH2 and CASR. Interacts with AP2B1 (dephosphorylated at 'Tyr-737'); phosphorylation of AP2B1 at 'Tyr-737' disrupts the interaction. Interacts (dephosphorylated at Ser-412) with CLTC. Interacts with CCR2 and GRK2. Interacts with CRR5. Interacts with PTAFR (phosphorylated on serine residues). Interacts with CLTC and MAP2K3. Interacts with CREB1. Interacts with TRAF6. Interacts with IGF1R and MDM2. Interacts with C5AR1. Interacts with PDE4D. Interacts with SRC (via the SH3 domain and the protein kinase domain); the interaction is independent of the phosphorylation state of SRC C-terminus. Interacts with TACR1. Interacts with RAF1. Interacts with CHUK, IKBKB and MAP3K14. Interacts with DVL1; the interaction is enhanced by phosphorylation of DVL1. Interacts with DVL2; the interaction is enhanced by phosphorylation of DVL2. Interacts with IGF1R. Associates with MAP kinase p38. Part of a MAPK signaling complex consisting of TACR1, ARRB1, SRC, MAPK1 (activated) and MAPK3 (activated). Part of a MAPK signaling complex consisting of F2RL1, ARRB1, RAF1, MAPK1 (activated) and MAPK3 (activated). Interacts with GPR143. Interacts with MAP2K4/MKK4. Interacts with HCK and CXCR1 (phosphorylated). Interacts with ACKR3 and ACKR4. Interacts with ARRDC1; the interaction is direct. Interacts with GPR61, GPR62 and GPR135. Post-translationally, constitutively phosphorylated at Ser-412 in the cytoplasm. At the plasma membrane, is rapidly dephosphorylated, a process that is required for clathrin binding and ADRB2 endocytosis but not for ADRB2 binding and desensitization. Once internalized, is rephosphorylated. In terms of processing, the ubiquitination status appears to regulate the formation and trafficking of beta-arrestin-GPCR complexes and signaling. Ubiquitination appears to occur GPCR-specific. Ubiquitinated by MDM2; the ubiquitination is required for rapid internalization of ADRB2. Deubiquitinated by USP33; the deubiquitination leads to a dissociation of the beta-arrestin-GPCR complex. Stimulation of a class A GPCR, such as ADRB2, induces transient ubiquitination and subsequently promotes association with USP33. Beta-arrestin 1A is found in cortex, cerebellum, striatum, pineal gland, retina and heart. Beta-arrestin 1B is found in spleen, lung, pituitary and kidney.

The protein resides in the cytoplasm. It is found in the nucleus. It localises to the cell membrane. The protein localises to the membrane. Its subcellular location is the clathrin-coated pit. The protein resides in the cell projection. It is found in the pseudopodium. It localises to the cytoplasmic vesicle. In terms of biological role, functions in regulating agonist-mediated G-protein coupled receptor (GPCR) signaling by mediating both receptor desensitization and resensitization processes. During homologous desensitization, beta-arrestins bind to the GPRK-phosphorylated receptor and sterically preclude its coupling to the cognate G-protein; the binding appears to require additional receptor determinants exposed only in the active receptor conformation. The beta-arrestins target many receptors for internalization by acting as endocytic adapters (CLASPs, clathrin-associated sorting proteins) and recruiting the GPRCs to the adapter protein 2 complex 2 (AP-2) in clathrin-coated pits (CCPs). However, the extent of beta-arrestin involvement appears to vary significantly depending on the receptor, agonist and cell type. Internalized arrestin-receptor complexes traffic to intracellular endosomes, where they remain uncoupled from G-proteins. Two different modes of arrestin-mediated internalization occur. Class A receptors, like ADRB2, OPRM1, ENDRA, D1AR and ADRA1B dissociate from beta-arrestin at or near the plasma membrane and undergo rapid recycling. Class B receptors, like AVPR2, AGTR1, NTSR1, TRHR and TACR1 internalize as a complex with arrestin and traffic with it to endosomal vesicles, presumably as desensitized receptors, for extended periods of time. Receptor resensitization then requires that receptor-bound arrestin is removed so that the receptor can be dephosphorylated and returned to the plasma membrane. Involved in internalization of P2RY4 and UTP-stimulated internalization of P2RY2. Involved in phosphorylation-dependent internalization of OPRD1 ands subsequent recycling. Involved in the degradation of cAMP by recruiting cAMP phosphodiesterases to ligand-activated receptors. Beta-arrestins function as multivalent adapter proteins that can switch the GPCR from a G-protein signaling mode that transmits short-lived signals from the plasma membrane via small molecule second messengers and ion channels to a beta-arrestin signaling mode that transmits a distinct set of signals that are initiated as the receptor internalizes and transits the intracellular compartment. Acts as a signaling scaffold for MAPK pathways such as MAPK1/3 (ERK1/2). ERK1/2 activated by the beta-arrestin scaffold is largely excluded from the nucleus and confined to cytoplasmic locations such as endocytic vesicles, also called beta-arrestin signalosomes. Recruits c-Src/SRC to ADRB2 resulting in ERK activation. GPCRs for which the beta-arrestin-mediated signaling relies on both ARRB1 and ARRB2 (codependent regulation) include ADRB2, F2RL1 and PTH1R. For some GPCRs the beta-arrestin-mediated signaling relies on either ARRB1 or ARRB2 and is inhibited by the other respective beta-arrestin form (reciprocal regulation). Inhibits ERK1/2 signaling in AGTR1- and AVPR2-mediated activation (reciprocal regulation). Is required for SP-stimulated endocytosis of NK1R and recruits c-Src/SRC to internalized NK1R resulting in ERK1/2 activation, which is required for the antiapoptotic effects of SP. Is involved in proteinase-activated F2RL1-mediated ERK activity. Acts as a signaling scaffold for the AKT1 pathway. Is involved in alpha-thrombin-stimulated AKT1 signaling. Is involved in IGF1-stimulated AKT1 signaling leading to increased protection from apoptosis. Involved in activation of the p38 MAPK signaling pathway and in actin bundle formation. Involved in F2RL1-mediated cytoskeletal rearrangement and chemotaxis. Involved in AGTR1-mediated stress fiber formation by acting together with GNAQ to activate RHOA. Appears to function as signaling scaffold involved in regulation of MIP-1-beta-stimulated CCR5-dependent chemotaxis. Involved in attenuation of NF-kappa-B-dependent transcription in response to GPCR or cytokine stimulation by interacting with and stabilizing CHUK. May serve as nuclear messenger for GPCRs. Involved in OPRD1-stimulated transcriptional regulation by translocating to CDKN1B and FOS promoter regions and recruiting EP300 resulting in acetylation of histone H4. Involved in regulation of LEF1 transcriptional activity via interaction with DVL1 and/or DVL2 Also involved in regulation of receptors other than GPCRs. Involved in Toll-like receptor and IL-1 receptor signaling through the interaction with TRAF6 which prevents TRAF6 autoubiquitination and oligomerization required for activation of NF-kappa-B and JUN. Involved in IL8-mediated granule release in neutrophils. Binds phosphoinositides. Binds inositol hexakisphosphate (InsP6). Required for atypical chemokine receptor ACKR2-induced RAC1-LIMK1-PAK1-dependent phosphorylation of cofilin (CFL1) and for the up-regulation of ACKR2 from endosomal compartment to cell membrane, increasing its efficiency in chemokine uptake and degradation. Involved in the internalization of the atypical chemokine receptor ACKR3. Negatively regulates the NOTCH signaling pathway by mediating the ubiquitination and degradation of NOTCH1 by ITCH. Participates in the recruitment of the ubiquitin-protein ligase to the receptor. The polypeptide is Beta-arrestin-1 (ARRB1) (Bos taurus (Bovine)).